Here is a 160-residue protein sequence, read N- to C-terminus: Arginine repressor (160 aa).

It belongs to the ArgR family.

It localises to the cytoplasm. It participates in amino-acid biosynthesis; L-arginine biosynthesis [regulation]. In terms of biological role, regulates arginine biosynthesis genes. The chain is Arginine repressor from Anaeromyxobacter sp. (strain K).